Reading from the N-terminus, the 333-residue chain is Ribosomal RNA large subunit methyltransferase F (333 aa).

Over residues 1–10 (MPQPPKRPRK) the composition is skewed to basic residues. Residues 1 to 31 (MPQPPKRPRKPAPAAVKTAPAKGELHPRNRH) are disordered. Residues 12–22 (APAAVKTAPAK) are compositionally biased toward low complexity.

This sequence belongs to the methyltransferase superfamily. METTL16/RlmF family.

Its subcellular location is the cytoplasm. It catalyses the reaction adenosine(1618) in 23S rRNA + S-adenosyl-L-methionine = N(6)-methyladenosine(1618) in 23S rRNA + S-adenosyl-L-homocysteine + H(+). Its function is as follows. Specifically methylates the adenine in position 1618 of 23S rRNA. This is Ribosomal RNA large subunit methyltransferase F from Ectopseudomonas mendocina (strain ymp) (Pseudomonas mendocina).